The following is a 273-amino-acid chain: Small ribosomal subunit protein eS1 (273 aa).

This sequence belongs to the eukaryotic ribosomal protein eS1 family. As to quaternary structure, component of the small ribosomal subunit. Mature ribosomes consist of a small (40S) and a large (60S) subunit. The 40S subunit contains about 33 different proteins and 1 molecule of RNA (18S). The 60S subunit contains about 49 different proteins and 3 molecules of RNA (25S, 5.8S and 5S).

The protein resides in the cytoplasm. The polypeptide is Small ribosomal subunit protein eS1 (rps3a) (Dictyostelium discoideum (Social amoeba)).